Consider the following 110-residue polypeptide: Thiosulfate sulfurtransferase GlpE (110 aa).

Residues Arg17–Ser105 form the Rhodanese domain. Cys65 functions as the Cysteine persulfide intermediate in the catalytic mechanism.

Belongs to the GlpE family.

Its subcellular location is the cytoplasm. The catalysed reaction is thiosulfate + hydrogen cyanide = thiocyanate + sulfite + 2 H(+). It carries out the reaction thiosulfate + [thioredoxin]-dithiol = [thioredoxin]-disulfide + hydrogen sulfide + sulfite + 2 H(+). In terms of biological role, transferase that catalyzes the transfer of sulfur from thiosulfate to thiophilic acceptors such as cyanide or dithiols. May function in a CysM-independent thiosulfate assimilation pathway by catalyzing the conversion of thiosulfate to sulfite, which can then be used for L-cysteine biosynthesis. The polypeptide is Thiosulfate sulfurtransferase GlpE (Pseudomonas paraeruginosa (strain DSM 24068 / PA7) (Pseudomonas aeruginosa (strain PA7))).